The primary structure comprises 504 residues: Sphingosine-1-phosphate transporter SPNS2 (504 aa).

The next 11 helical transmembrane spans lie at 48–70 (LLRCRTPLVAAGILSFGNVLNYM), 94–114 (GLLQTVFICSFMVAAPIFGYL), 122–142 (IILSCGIFFWSAVTLLSSFIT), 182–202 (VMLSVFYLAIPLGSGLGYILG), 214–234 (WALRVSPMLGLTAGTLILIFV), 269–289 (VFSSLASAAVSFATGAFGIWI), 317–337 (LIFGAITCVTGLLGVVIGAVT), 351–371 (LVCAVSMLGSAIFICLIFVVA), 375–395 (IVGAYICIFIGETLLFLNWAI), 415–435 (FQGFTSHLLGDAGSPYLIGLI), and 460–480 (LCPFVIVLGGMFFLATALFFL).

Belongs to the major facilitator superfamily. Spinster (TC 2.A.1.49) family.

The protein resides in the cell membrane. It is found in the endosome membrane. The enzyme catalyses sphing-4-enine 1-phosphate(in) = sphing-4-enine 1-phosphate(out). It catalyses the reaction sphinganine 1-phosphate(in) = sphinganine 1-phosphate(out). Lipid transporter that specifically mediates export of sphingosine-1-phosphate (sphing-4-enine 1-phosphate, S1P) and sphinganine-1-phosphate, which play critical roles in regulating heart development. Mediates the export of S1P from cells in the extraembryonic yolk syncytial layer (YSL), thereby regulating myocardial precursor migration. In Danio rerio (Zebrafish), this protein is Sphingosine-1-phosphate transporter SPNS2.